Reading from the N-terminus, the 191-residue chain is Orotate phosphoribosyltransferase (191 aa).

116–124 (EDVVTTGGS) is a binding site for 5-phospho-alpha-D-ribose 1-diphosphate. Orotate contacts are provided by T120 and R148.

The protein belongs to the purine/pyrimidine phosphoribosyltransferase family. PyrE subfamily. Homodimer. Requires Mg(2+) as cofactor.

It catalyses the reaction orotidine 5'-phosphate + diphosphate = orotate + 5-phospho-alpha-D-ribose 1-diphosphate. It functions in the pathway pyrimidine metabolism; UMP biosynthesis via de novo pathway; UMP from orotate: step 1/2. Functionally, catalyzes the transfer of a ribosyl phosphate group from 5-phosphoribose 1-diphosphate to orotate, leading to the formation of orotidine monophosphate (OMP). In Carboxydothermus hydrogenoformans (strain ATCC BAA-161 / DSM 6008 / Z-2901), this protein is Orotate phosphoribosyltransferase.